An 80-amino-acid polypeptide reads, in one-letter code: Exodeoxyribonuclease 7 small subunit (80 aa).

It belongs to the XseB family. In terms of assembly, heterooligomer composed of large and small subunits.

The protein resides in the cytoplasm. The enzyme catalyses Exonucleolytic cleavage in either 5'- to 3'- or 3'- to 5'-direction to yield nucleoside 5'-phosphates.. Functionally, bidirectionally degrades single-stranded DNA into large acid-insoluble oligonucleotides, which are then degraded further into small acid-soluble oligonucleotides. The chain is Exodeoxyribonuclease 7 small subunit from Lactobacillus helveticus (strain DPC 4571).